The sequence spans 226 residues: Biosynthetic peptidoglycan transglycosylase (226 aa).

Residues 8 to 28 (FFGWTWFVMWRFLLLLALLLL) form a helical membrane-spanning segment.

It belongs to the glycosyltransferase 51 family.

The protein resides in the cell inner membrane. The enzyme catalyses [GlcNAc-(1-&gt;4)-Mur2Ac(oyl-L-Ala-gamma-D-Glu-L-Lys-D-Ala-D-Ala)](n)-di-trans,octa-cis-undecaprenyl diphosphate + beta-D-GlcNAc-(1-&gt;4)-Mur2Ac(oyl-L-Ala-gamma-D-Glu-L-Lys-D-Ala-D-Ala)-di-trans,octa-cis-undecaprenyl diphosphate = [GlcNAc-(1-&gt;4)-Mur2Ac(oyl-L-Ala-gamma-D-Glu-L-Lys-D-Ala-D-Ala)](n+1)-di-trans,octa-cis-undecaprenyl diphosphate + di-trans,octa-cis-undecaprenyl diphosphate + H(+). Its pathway is cell wall biogenesis; peptidoglycan biosynthesis. In terms of biological role, peptidoglycan polymerase that catalyzes glycan chain elongation from lipid-linked precursors. This chain is Biosynthetic peptidoglycan transglycosylase, found in Shewanella frigidimarina (strain NCIMB 400).